Reading from the N-terminus, the 212-residue chain is Stromal cell-derived factor 2-like protein (212 aa).

An N-terminal signal peptide occupies residues 1–19 (MKSLFLILILCITIPLIFA). An N-linked (GlcNAc...) asparagine glycan is attached at Asn-20. MIR domains are found at residues 29 to 86 (ITKV…IKGP), 94 to 149 (GTVV…VETE), and 151 to 206 (GKEW…TEEG).

The protein localises to the secreted. In Dictyostelium discoideum (Social amoeba), this protein is Stromal cell-derived factor 2-like protein.